The following is a 368-amino-acid chain: MTAIIELNNLSVQFHQKGRLVTAVKDATLHIEKGDIYGVIGYSGAGKSTLVRTINLLQKPTKGQIVINGEKIFDSENPVKFTGAKLREFRQKIGMIFQHFNLLSEKTVFNNVAFALQHSQIEDKNGKKRYLTKKEKTDKVTELLKLVDLEELSDKYPAQLSGGQKQRVAIARALANDPEILISDEGTSALDPKTTNQILDLLKSLHEKLGITVVLITHEMQVVKEIANKVAVMQNGEIIEQNSLIDIFAQPKEALTKQFIETTSSVNRFIASLSRTELLAQLADDEELIHLDYSGSELEDPVVSDITKKFDVTTNIFYGNVELLQGQPFGSLVLTLKGSSEHRAAAKAYFVERHLKFEVLGKIERTVD.

An ABC transporter domain is found at 5–260 (IELNNLSVQF…PKEALTKQFI (256 aa)). 41–48 (GYSGAGKS) is an ATP binding site.

This sequence belongs to the ABC transporter superfamily. Methionine importer (TC 3.A.1.24) family. In terms of assembly, the complex is composed of two ATP-binding proteins (MetN), two transmembrane proteins (MetI) and a solute-binding protein (MetQ).

It localises to the cell membrane. It catalyses the reaction L-methionine(out) + ATP + H2O = L-methionine(in) + ADP + phosphate + H(+). The catalysed reaction is D-methionine(out) + ATP + H2O = D-methionine(in) + ADP + phosphate + H(+). Functionally, part of the ABC transporter complex MetNIQ involved in methionine import. Responsible for energy coupling to the transport system. The protein is Methionine import ATP-binding protein MetN of Lactococcus lactis subsp. lactis (strain IL1403) (Streptococcus lactis).